The primary structure comprises 130 residues: Small ribosomal subunit protein uS8 (130 aa).

This sequence belongs to the universal ribosomal protein uS8 family. In terms of assembly, part of the 30S ribosomal subunit. Contacts proteins S5 and S12.

One of the primary rRNA binding proteins, it binds directly to 16S rRNA central domain where it helps coordinate assembly of the platform of the 30S subunit. The protein is Small ribosomal subunit protein uS8 of Aliivibrio fischeri (strain ATCC 700601 / ES114) (Vibrio fischeri).